The following is a 347-amino-acid chain: Globoside alpha-1,3-N-acetylgalactosaminyltransferase 1 (347 aa).

Residues 1-5 (MHRRR) lie on the Cytoplasmic side of the membrane. The helical; Signal-anchor for type II membrane protein transmembrane segment at 6 to 26 (LALGLGFCLLAGTSLSVLWVY) threads the bilayer. The Lumenal segment spans residues 27–347 (LENWLPVSYV…LDKDISCLRS (321 aa)). N108 is a glycosylation site (N-linked (GlcNAc...) asparagine). Substrate-binding positions include 116-121 (FAVGKY), 206-208 (DVD), and 228-231 (HPSY). 2 residues coordinate Mn(2+): D206 and D208. The active-site Nucleophile is the E298.

Belongs to the glycosyltransferase 6 family. Mn(2+) serves as cofactor. Widely expressed. Expressed at higher level in placenta, ovary and peripheral blood leukocyte, whereas it is weakly expressed in liver, thymus, and testis. Expressed in bone marrow erythroid cells.

It localises to the golgi apparatus membrane. The protein operates within protein modification; protein glycosylation. Has lost the ability to synthesize Forssman glycolipid antigen (FORS1/FG). Might have acquired an alternative function in glycosphingolipid metabolism, but it remains to be established. It appears to have drifted more slowly than confirmed pseudogenes in the glycosyltransferase 6 family, suggesting that it has remained under evolutionary pressure. This chain is Globoside alpha-1,3-N-acetylgalactosaminyltransferase 1, found in Homo sapiens (Human).